Consider the following 800-residue polypeptide: Protein MICRORCHIDIA 4 (800 aa).

Disordered stretches follow at residues 1–76 (MEPI…ARSD) and 552–702 (AKRQ…RTLS). Polar residues predominate over residues 9–18 (NPVTTSTLST). Residues 36 to 47 (ELSSSNEGSELG) show a composition bias toward low complexity. 2 stretches are compositionally biased toward basic and acidic residues: residues 559–578 (SAKD…EFDP) and 628–641 (VSKD…EKGG). Acidic residues predominate over residues 666–675 (NSDDDYDCDS). Residues 699 to 766 (RTLSQLEQEN…QASLIDVFAE (68 aa)) are a coiled coil. Short sequence motifs (nuclear localization signal) lie at residues 716 to 723 (DKKEEVFL) and 735 to 742 (LRKTLEAE).

It belongs to the MORC ATPase protein family. In terms of assembly, homodimer and heterodimer. Component of an RNA-directed DNA methylation (RdDM) complex. Forms homomeric complexes. The cofactor is Mg(2+). It depends on Mn(2+) as a cofactor.

The protein localises to the nucleus. Exhibits ATPase activity. Binds DNA/RNA in a non-specific manner and exhibits endonuclease activity. Probably involved in DNA repair. Involved in RNA-directed DNA methylation (RdDM) as a component of the RdDM machinery and required for gene silencing. May also be involved in the regulation of chromatin architecture to maintain gene silencing. Together with MORC7, acts to suppress a wide set of non-methylated protein-coding genes, especially involved in pathogen response. Positive regulator of defense against the oomycete Hyaloperonospora arabidopsidis (Hpa). The sequence is that of Protein MICRORCHIDIA 4 from Arabidopsis thaliana (Mouse-ear cress).